Reading from the N-terminus, the 503-residue chain is AMP phosphorylase (503 aa).

Residues Gly-168, 194 to 199, and Thr-203 each bind AMP; that span reads SRAITS. The Proton donor role is filled by Asp-256. 2 residues coordinate AMP: Ser-264 and Lys-288.

Belongs to the thymidine/pyrimidine-nucleoside phosphorylase family. Type 2 subfamily.

The catalysed reaction is AMP + phosphate = alpha-D-ribose 1,5-bisphosphate + adenine. The enzyme catalyses CMP + phosphate = cytosine + alpha-D-ribose 1,5-bisphosphate. It catalyses the reaction UMP + phosphate = alpha-D-ribose 1,5-bisphosphate + uracil. Catalyzes the conversion of AMP and phosphate to adenine and ribose 1,5-bisphosphate (R15P). Exhibits phosphorylase activity toward CMP and UMP in addition to AMP. Functions in an archaeal AMP degradation pathway, together with R15P isomerase and RubisCO. The polypeptide is AMP phosphorylase (Thermococcus sibiricus (strain DSM 12597 / MM 739)).